A 234-amino-acid polypeptide reads, in one-letter code: Viral Fc-gamma receptor-like protein IR11 (234 aa).

An N-terminal signal peptide occupies residues 1–23 (MQTYSTPLTLVIVTSLFLFTTQG). One can recognise an Ig-like V-type domain in the interval 24-122 (SSSNAVEPTK…VKDTGVYLLQ (99 aa)). Topologically, residues 24 to 182 (SSSNAVEPTK…DLKRQWSGLS (159 aa)) are extracellular. N-linked (GlcNAc...) asparagine; by host glycosylation is found at asparagine 57, asparagine 105, and asparagine 110. A helical transmembrane segment spans residues 183–203 (LHCAWVSGMMIFVGALVICFL). The Cytoplasmic segment spans residues 204–234 (RSQRIGEQDAEHLRTDLDTEPLLLTVDGDLQ).

It belongs to the RL11 family.

The protein localises to the membrane. The sequence is that of Viral Fc-gamma receptor-like protein IR11 from Homo sapiens (Human).